Reading from the N-terminus, the 486-residue chain is Odorant receptor coreceptor (486 aa).

Residues 1 to 47 (MTTSMQPSKYTGLVADLMPNIRAMKYSGLFMHNFTGGSAFMKKVYSS) lie on the Cytoplasmic side of the membrane. The helical transmembrane segment at 48–68 (VHLVFLLMQFTFILVNMALNA) threads the bilayer. The Extracellular segment spans residues 69-75 (EEVNELS). A helical transmembrane segment spans residues 76-96 (GNTITTLFFTHCITKFIYLAV). Over 97-135 (NQKNFYRTLNIWNQVNTHPLFAESDARYHSIALAKMRKL) the chain is Cytoplasmic. The chain crosses the membrane as a helical span at residues 136 to 156 (FFLVMLTTVASATAWTTITFF). Topologically, residues 157–191 (GDSVKMVVDHETNSSIPVEIPRLPIKSFYPWNASH) are extracellular. Asparagine 169 and asparagine 188 each carry an N-linked (GlcNAc...) asparagine glycan. The helical transmembrane segment at 192–212 (GMFYMISFAFQIYYVLFSMIH) threads the bilayer. Residues 213-351 (SNLCDVMFCS…VERHKHVVRL (139 aa)) are Cytoplasmic-facing. A helical transmembrane segment spans residues 352–372 (VAAIGDTYGAALLLHMLTSTI). The Extracellular portion of the chain corresponds to 373 to 390 (KLTLLAYQATKINGVNVY). Residues 391–411 (AFTVVGYLGYALAQVFHFCIF) form a helical membrane-spanning segment. At 412-462 (GNRLIEESSSVMEAAYSCHWYDGSEEAKTFVQIVCQQCQKAMSISGAKFFT) the chain is on the cytoplasmic side. A helical transmembrane segment spans residues 463–483 (VSLDLFASVLGAVVTYFMVLV). At 484-486 (QLK) the chain is on the extracellular side.

Belongs to the insect chemoreceptor superfamily. Heteromeric odorant receptor channel (TC 1.A.69) family. Orco subfamily. Heterodimer with conventional odorant receptors (ORs). Complexes exist early in the endomembrane system in olfactory sensory neurons (OSNs), coupling these complexes to the conserved ciliary trafficking pathway. As to expression, expression is restricted to olfactory sensory neurons (OSNs). Coexpressed with Snmp in a lateral-distal population of OSNs. Expressed in the embryonic antennal-maxillary complex, in all 21 OSNs of the larval dorsal organ, in the pupal antennal OSNs, in all 120 adult maxillary palp neurons and in approximately 70-80% of adult antennal OSNs, where expression is highest at the dorsal-medial edge. Localized to OSN cell bodies and to the distal portion of ciliated OSN dendrites.

The protein resides in the cell membrane. Functionally, odorant coreceptor which complexes with conventional odorant receptors (ORs) to form odorant-sensing units, providing sensitive and prolonged odorant signaling and calcium permeability. Orco is a universal and integral part of the functional odorant receptor, involved in the dendritic localization of other olfactory receptors. Expression of Orco alone leads to formation of rapid and transient ion channels not directly responding to odorants, but directly activated by intracellular cAMP or cGMP. Snmp, Or67d and lush act in concert to capture fatty-acid-derived male pheromone 11-cis vaccenyl acetate (cVA) molecules on the surface of Or67d expressing olfactory dendrites and facilitate their transfer to the odorant-receptor Orco complex. This chain is Odorant receptor coreceptor (Orco), found in Drosophila melanogaster (Fruit fly).